A 360-amino-acid chain; its full sequence is Peptide chain release factor 1 (360 aa).

Position 235 is an N5-methylglutamine (glutamine 235). The interval 285–313 is disordered; that stretch reads KRQQAEASTRRNLLGSGDRSDRNRTYNFP.

Belongs to the prokaryotic/mitochondrial release factor family. Methylated by PrmC. Methylation increases the termination efficiency of RF1.

It is found in the cytoplasm. In terms of biological role, peptide chain release factor 1 directs the termination of translation in response to the peptide chain termination codons UAG and UAA. The protein is Peptide chain release factor 1 of Klebsiella pneumoniae (strain 342).